A 570-amino-acid chain; its full sequence is Probable electron transfer flavoprotein-ubiquinone oxidoreductase (570 aa).

Residue 13–27 (VVIVGAGPAGLSAAI) coordinates FAD. 4 residues coordinate [4Fe-4S] cluster: Cys-515, Cys-539, Cys-542, and Cys-545. Residues 530–559 (KRFQINAANCVHCKTCDIKDPSQNITWVTP) enclose the 4Fe-4S ferredoxin-type domain.

[4Fe-4S] cluster serves as cofactor. The cofactor is FAD.

The enzyme catalyses a ubiquinone + reduced [electron-transfer flavoprotein] = a ubiquinol + oxidized [electron-transfer flavoprotein] + H(+). In terms of biological role, accepts electrons from ETF and reduces ubiquinone. The protein is Probable electron transfer flavoprotein-ubiquinone oxidoreductase (etfD) of Acinetobacter baylyi (strain ATCC 33305 / BD413 / ADP1).